The following is a 136-amino-acid chain: Antistasin (136 aa).

A signal peptide spans methionine 1–cysteine 17. Glutamine 18 carries the post-translational modification Pyrrolidone carboxylic acid. Cystine bridges form between cysteine 25–cysteine 36, cysteine 30–cysteine 43, cysteine 45–cysteine 65, cysteine 50–cysteine 68, cysteine 54–cysteine 70, cysteine 79–cysteine 90, cysteine 84–cysteine 97, cysteine 99–cysteine 120, cysteine 105–cysteine 123, and cysteine 109–cysteine 125. Residues cysteine 45–cysteine 70 form the Antistasin-like 1 domain. Residues lysine 100 to cysteine 125 enclose the Antistasin-like 2 domain. Heparin-binding positions include lysine 114–lysine 117 and lysine 128–leucine 135.

It belongs to the protease inhibitor I15 (antistasin) family.

It localises to the secreted. In terms of biological role, this highly disulfide-bonded protein is a potent inhibitor of factor Xa. May have therapeutic utility as an anticoagulant. Also exhibits a strong metastatic activity. This Haementeria officinalis (Mexican leech) protein is Antistasin.